The primary structure comprises 171 residues: Tetratricopeptide repeat protein 9C (171 aa).

TPR repeat units follow at residues 8 to 41 (AQVY…LRGL), 72 to 107 (THCY…QPDN), and 108 to 141 (AKAL…QPKD).

It belongs to the TTC9 family.

This chain is Tetratricopeptide repeat protein 9C (Ttc9c), found in Mus musculus (Mouse).